A 262-amino-acid chain; its full sequence is Bacteriorhodopsin (262 aa).

A propeptide spanning residues 1–13 is cleaved from the precursor; the sequence is MLELLPTAVEGVS. Q14 carries the pyrrolidone carboxylic acid modification. At 14-22 the chain is on the extracellular side; the sequence is QAQITGRPE. Residues 23 to 42 form a helical membrane-spanning segment; the sequence is WIWLALGTALMGLGTLYFLV. Over 43–56 the chain is Cytoplasmic; the sequence is KGMGVSDPDAKKFY. Residues 57 to 75 form a helical membrane-spanning segment; sequence AITTLVPAIAFTMYLSMLL. Topologically, residues 76 to 92 are extracellular; sequence GYGLTMVPFGGEQNPIY. Residues 93-109 traverse the membrane as a helical segment; that stretch reads WARYADWLFTTPLLLLD. Residues 110–120 are Cytoplasmic-facing; it reads LALLVDADQGT. Residues 121–140 traverse the membrane as a helical segment; sequence ILALVGADGIMIGTGLVGAL. Over 141–147 the chain is Extracellular; sequence TKVYSYR. A helical transmembrane segment spans residues 148-167; that stretch reads FVWWAISTAAMLYILYVLFF. Residues 168-185 lie on the Cytoplasmic side of the membrane; that stretch reads GFTSKAESMRPEVASTFK. Residues 186–204 traverse the membrane as a helical segment; the sequence is VLRNVTVVLWSAYPVVWLI. Over 205–216 the chain is Extracellular; sequence GSEGAGIVPLNI. Residues 217-236 form a helical membrane-spanning segment; that stretch reads ETLLFMVLDVSAKVGFGLIL. K229 carries the post-translational modification N6-(retinylidene)lysine. Residues 237-262 lie on the Cytoplasmic side of the membrane; the sequence is LRSRAIFGEAEAPEPSAGDGAAATSD.

Homotrimer. The covalent binding of retinal to the apoprotein, bacterioopsin, generates bacteriorhodopsin.

Its subcellular location is the cell membrane. In terms of biological role, light-driven proton pump. The chain is Bacteriorhodopsin (bop) from Halobacterium salinarum (strain ATCC 700922 / JCM 11081 / NRC-1) (Halobacterium halobium).